The chain runs to 356 residues: Ion-translocating oxidoreductase complex subunit D (356 aa).

A run of 4 helical transmembrane segments spans residues 20–40 (LMLL…WFFG), 42–62 (GVLV…ALAI), 68–88 (PVGF…IGVS), and 117–137 (GFNP…SFPV). An FMN phosphoryl threonine modification is found at threonine 177. Transmembrane regions (helical) follow at residues 205–225 (WASA…LYLL), 229–249 (VYTW…AALF), 259–279 (GSPL…FIVT), 292–312 (VIYG…GSSY), and 315–335 (GVAF…YYTT).

It belongs to the NqrB/RnfD family. In terms of assembly, the complex is composed of six subunits: RnfA, RnfB, RnfC, RnfD, RnfE and RnfG. FMN is required as a cofactor.

The protein resides in the cell inner membrane. In terms of biological role, part of a membrane-bound complex that couples electron transfer with translocation of ions across the membrane. This Cellvibrio japonicus (strain Ueda107) (Pseudomonas fluorescens subsp. cellulosa) protein is Ion-translocating oxidoreductase complex subunit D.